A 494-amino-acid polypeptide reads, in one-letter code: UDP-N-acetylmuramate--L-alanine ligase (494 aa).

An ATP-binding site is contributed by 140–146 (GTHGKTT).

It belongs to the MurCDEF family.

It is found in the cytoplasm. It catalyses the reaction UDP-N-acetyl-alpha-D-muramate + L-alanine + ATP = UDP-N-acetyl-alpha-D-muramoyl-L-alanine + ADP + phosphate + H(+). Its pathway is cell wall biogenesis; peptidoglycan biosynthesis. Functionally, cell wall formation. The polypeptide is UDP-N-acetylmuramate--L-alanine ligase (Trichormus variabilis (strain ATCC 29413 / PCC 7937) (Anabaena variabilis)).